We begin with the raw amino-acid sequence, 255 residues long: MFKVRVIPCLDVKDGRVVKGVNFVDLRDAGDPVEAAIAYDAAGADELCFLDITATHENRGIMLDVVRRTAEACFMPVTVGGGVRTVDDIKTLLRSGADKVSINSAAVARREFVKEAAEKFGDQCIVVAIDAKRVPGRDRWEIFTHGGRKGTGIDAIEFAQEVVSLGAGEILLTSMDRDGTRSGFDIPLTRAIADSVQVPVIASGGVGDLDHLVDGIREGHATAVLAASIFHFGEYTIREAKDHMVRAGLPMRLDP.

Catalysis depends on residues Asp11 and Asp130.

The protein belongs to the HisA/HisF family. Heterodimer of HisH and HisF.

It is found in the cytoplasm. The catalysed reaction is 5-[(5-phospho-1-deoxy-D-ribulos-1-ylimino)methylamino]-1-(5-phospho-beta-D-ribosyl)imidazole-4-carboxamide + L-glutamine = D-erythro-1-(imidazol-4-yl)glycerol 3-phosphate + 5-amino-1-(5-phospho-beta-D-ribosyl)imidazole-4-carboxamide + L-glutamate + H(+). It participates in amino-acid biosynthesis; L-histidine biosynthesis; L-histidine from 5-phospho-alpha-D-ribose 1-diphosphate: step 5/9. IGPS catalyzes the conversion of PRFAR and glutamine to IGP, AICAR and glutamate. The HisF subunit catalyzes the cyclization activity that produces IGP and AICAR from PRFAR using the ammonia provided by the HisH subunit. This Rhodopseudomonas palustris (strain BisB5) protein is Imidazole glycerol phosphate synthase subunit HisF.